A 449-amino-acid chain; its full sequence is Mitochondrial distribution and morphology protein 10 (449 aa).

Disordered stretches follow at residues glycine 215–aspartate 244 and aspartate 282–serine 307. The span at proline 285–leucine 301 shows a compositional bias: low complexity.

The protein belongs to the MDM10 family. In terms of assembly, component of the ER-mitochondria encounter structure (ERMES) or MDM complex, composed of MMM1, MDM10, MDM12 and MDM34. Associates with the mitochondrial outer membrane sorting assembly machinery SAM(core) complex.

The protein resides in the mitochondrion outer membrane. Functionally, component of the ERMES/MDM complex, which serves as a molecular tether to connect the endoplasmic reticulum and mitochondria. Components of this complex are involved in the control of mitochondrial shape and protein biogenesis and may function in phospholipid exchange. MDM10 is involved in the late assembly steps of the general translocase of the mitochondrial outer membrane (TOM complex). Functions in the TOM40-specific route of the assembly of outer membrane beta-barrel proteins, including the association of TOM40 with the receptor TOM22 and small TOM proteins. Can associate with the SAM(core) complex as well as the MDM12-MMM1 complex, both involved in late steps of the major beta-barrel assembly pathway, that is responsible for biogenesis of all outer membrane beta-barrel proteins. May act as a switch that shuttles between both complexes and channels precursor proteins into the TOM40-specific pathway. Plays a role in mitochondrial morphology and in the inheritance of mitochondria. This is Mitochondrial distribution and morphology protein 10 from Postia placenta (strain ATCC 44394 / Madison 698-R) (Brown rot fungus).